The primary structure comprises 380 residues: Queuine tRNA-ribosyltransferase (380 aa).

Catalysis depends on Asp95, which acts as the Proton acceptor. Residues 95-99 (DSGGF), Asp149, Gln192, and Gly219 contribute to the substrate site. The RNA binding stretch occupies residues 250–256 (GVGSPDA). The active-site Nucleophile is the Asp269. Positions 274-278 (TRIAR) are RNA binding; important for wobble base 34 recognition. Cys307, Cys309, Cys312, and His338 together coordinate Zn(2+).

This sequence belongs to the queuine tRNA-ribosyltransferase family. Homodimer. Within each dimer, one monomer is responsible for RNA recognition and catalysis, while the other monomer binds to the replacement base PreQ1. The cofactor is Zn(2+).

The catalysed reaction is 7-aminomethyl-7-carbaguanine + guanosine(34) in tRNA = 7-aminomethyl-7-carbaguanosine(34) in tRNA + guanine. It participates in tRNA modification; tRNA-queuosine biosynthesis. Catalyzes the base-exchange of a guanine (G) residue with the queuine precursor 7-aminomethyl-7-deazaguanine (PreQ1) at position 34 (anticodon wobble position) in tRNAs with GU(N) anticodons (tRNA-Asp, -Asn, -His and -Tyr). Catalysis occurs through a double-displacement mechanism. The nucleophile active site attacks the C1' of nucleotide 34 to detach the guanine base from the RNA, forming a covalent enzyme-RNA intermediate. The proton acceptor active site deprotonates the incoming PreQ1, allowing a nucleophilic attack on the C1' of the ribose to form the product. After dissociation, two additional enzymatic reactions on the tRNA convert PreQ1 to queuine (Q), resulting in the hypermodified nucleoside queuosine (7-(((4,5-cis-dihydroxy-2-cyclopenten-1-yl)amino)methyl)-7-deazaguanosine). This Latilactobacillus sakei subsp. sakei (strain 23K) (Lactobacillus sakei subsp. sakei) protein is Queuine tRNA-ribosyltransferase.